The following is a 62-amino-acid chain: Keratin-associated protein 8-1 (62 aa).

Residues glycine 12 to cysteine 53 form a 12 X 2 AA repeats of G-[YCGS] region.

This sequence belongs to the KRTAP type 8 family. In terms of assembly, interacts with wool keratins. As to expression, wool.

Functionally, in the wool cortex, wool keratin intermediate filaments are embedded in an interfilamentous matrix, consisting of hair keratin-associated proteins (KRTAP), which are essential for the formation of a rigid and resistant wool shaft through their extensive disulfide bond cross-linking with abundant cysteine residues of wool keratins. The matrix proteins include the high-sulfur and high-glycine-tyrosine keratins. The sequence is that of Keratin-associated protein 8-1 (KRTAP8-1) from Ovis aries (Sheep).